A 579-amino-acid polypeptide reads, in one-letter code: Nuclear receptor coactivator 5 (579 aa).

N-acetylmethionine is present on methionine 1. The disordered stretch occupies residues 1-78 (MNTAPSRPSP…LRDHRDSRSV (78 aa)). The segment at 1-158 (MNTAPSRPSP…RDSFDGRGPP (158 aa)) is transcription repression. At threonine 3 the chain carries Phosphothreonine. Phosphoserine is present on residues serine 9, serine 21, serine 24, serine 29, and serine 34. Basic and acidic residues-rich tracts occupy residues 11–62 (TRRD…DLRD) and 68–78 (DLRDHRDSRSV). Serine 96, serine 116, serine 126, serine 143, and serine 151 each carry phosphoserine. The disordered stretch occupies residues 148 to 173 (YRDSFDGRGPPGPESQSRAKERLKRE). A compositionally biased stretch (basic and acidic residues) spans 164 to 173 (SRAKERLKRE). Threonine 274 is subject to Phosphothreonine. The LXXLL motif motif lies at 345–349 (LINLL). 3 disordered regions span residues 375-428 (MRSS…PTSQ), 444-537 (VTAN…NFDN), and 560-579 (QTTAQMGQPQAPMGSYQRHY). Serine 378 carries the phosphoserine modification. At threonine 379 the chain carries Phosphothreonine. Serine 381 carries the phosphoserine modification. A compositionally biased stretch (polar residues) spans 395-413 (SGASLKTQPSSQPLQSGQV). Residues 446-457 (ANSSSASPSVAA) show a composition bias toward low complexity. The segment at 458–579 (GNTPNQNFST…APMGSYQRHY (122 aa)) is transcription activation. 2 stretches are compositionally biased toward polar residues: residues 459–485 (NTPNQNFSTAANSQPQQRSQASGNQPP) and 520–537 (SNMTSQRPVSSTGINFDN).

Binds HTATIP2/TIP30. Interacts with YLPM1. Forms a complex with ILF2, ILF3, YLPM1, KHDRBS1, RBMX and PPP1CA. In terms of tissue distribution, widely expressed.

It is found in the nucleus. Functionally, nuclear receptor coregulator that can have both coactivator and corepressor functions. Interacts with nuclear receptors for steroids (ESR1 and ESR2) independently of the steroid binding domain (AF-2) of the ESR receptors, and with the orphan nuclear receptor NR1D2. Involved in the coactivation of nuclear steroid receptors (ER) as well as the corepression of MYC in response to 17-beta-estradiol (E2). The polypeptide is Nuclear receptor coactivator 5 (NCOA5) (Homo sapiens (Human)).